A 412-amino-acid polypeptide reads, in one-letter code: Esterase EstD (412 aa).

Residues 1 to 20 form the signal peptide; sequence MRLTVFLSLFLGVMVFGAFD. Ser-243 (nucleophile) is an active-site residue. Active-site charge relay system residues include Asp-347 and His-378.

The protein belongs to the AB hydrolase superfamily. Esterase 10 family. In terms of assembly, exists mainly as a monomer and, to some extent as a dimer.

It carries out the reaction a carboxylic ester + H2O = an alcohol + a carboxylate + H(+). Its activity is regulated as follows. Is strongly inhibited by phenylmethylsulfonyl fluoride, a serine protease inhibitor, and by mercury chloride. Diethyl pyrocarbonate, a histidine modifier, also inhibits the reaction, albeit less pronounced than phenylmethylsulfonyl fluoride. EDTA and dithiothreitol have no effect on enzyme activity. Exhibits significant esterase activity with a preference for short acyl chain esters (C4-C8) in vitro. Its physiological function is not known. Displays neither proteolytic activity using casein as substrate, nor peptidase activity when assayed with L-leucine p-nitroanilide and L-proline p-nitroanilide. The sequence is that of Esterase EstD from Thermotoga maritima (strain ATCC 43589 / DSM 3109 / JCM 10099 / NBRC 100826 / MSB8).